Consider the following 2641-residue polypeptide: MGIKLRRLTAGICLITQLVFPMAAAAQGVVNAATQQPVPAQIAIANANTVPYTLGALESAQSVAERFGISVAELRKLNQFRTFARGFDNVRQGDELDVPAQVSENNLTPPPGNSSGNLEQQIASTSQQIGSLLAEDMNSEQAANMARGWASSQASGAMTDWLSRFGTARITLGVDEDFSLKNSQFDFLHPWYETPDNLFFSQHTLHRTDERTQINNGLGWRHFTPTWMSGINFFFDHDLSRYHSRAGIGAEYWRDYLKLSSNGYLRLTNWRSAPELDNDYEARPANGWDVRAEGWLPAWPHLGGKLVYEQYYGDEVALFDKDDRQSNPHAITAGLNYTPFPLMTFSAEQRQGKQGENDTRFAVDFTWQPGSAMQKQLDPNEVDARRSLAGSRFDLVDRNNNIVLEYRKKELVRLTLTDPVTGKSGEVKSLVSSLQTKYALKGYNVEATALEAAGGKVVTTGKDILVTLPAYRFTSTPETDNTWPIEVTAEDVKGNFSNREQSMVVVQAPTLSQKDSSVSLSSQTLSADSHSTATLTFIAHDAAGNPVIGLVLSTRHEGVQDITLSDWKDNGDGSYTQILTTGAMSGTLTLMPQLNGVDAAKAPAVVNIISVSSSRTHSSIKIDKDRYLSGNPIEVTVELRDENDKPVKEQKQQLNTAVSIDNVKPGVTTDWKETADGVYKATYTAYTKGSGLTAKLLMQNWNEDLHTAGFIIDANPQSAKIATLSASNNGVLANENAANTVSVNVADEGSNPINDHTVTFAVLSGSATSFNNQNTAKTDVNGLATFDLKSSKQEDNTVEVTLENGVKQTLIVSFVGDSSTAQVDLQKSKNEVVADGNDSATMTATVRDAKGNLLNDVKVTFNVNSAAAKLSQTEVNSHDGIATATLTSLKNGDYTVTASVSSGSQANQQVIFIGDQSTAALTLSVPSGDITVTNTAPLHMTATLQDKNGNPLKDKEITFSVPNDVASRFSISNSGKGMTDSNGTAIASLTGTLAGTHMITARLANSNVSDTQPMTFVADKDRAVVVLQTSKAEIIGNGVDETTLTATVKDPFDNVVKNLSVVFRTSPADTQLSLNARNTNENGIAEVTLKGTVLGVHTAEAILLNGNRDTKIVNIAPDASNAQVTLNIPAQQVVTNNSDSVQLTATVKDPSNHPVAGITVNFTMPQDVAANFTLENNGIAITQANGEAHVTLKGKKAGTHTVTATLGNNNASDAQPVTFVADKDSAVVVLQTSKAEIIGNGVDETTLTATVKDPFDNAVKDLQVTFSTNPADTQLSQSKSNTNDSGVAEVTFKGTVLGVHTAEATLPNGNNDTKIVNIAPDASNAQVTLNIPAQQVVTNNSDSVQLTATVKDPSNHPVAGITVNFTMPQDVAANFTLENNGIAITQANGEAHVTLKGKKAGTHTVTATLSNNNTSDSQPVTFVADKTSALVVLQISKNEITGNGVDSATLTATVKDQFDNEVNNLPVTFSTASSGLTLTPGESNTNESGIAQATLAGVAFGEQTVTASLANNGASDNKTVHFIGDTAAAKIIELTPVPDSIIAGTPQNSSGSVITATVVDNNGFPVKGVTVNFTSNAATAEMTNGGQAVTNEQGKATVTYTNTRSSIESGARPDTVEASLENGSSTLSTSINVNADASTAHLTLLQALFDTVSAGDTTNLYIEVKDNYGNGVPQQEVTLSVSPSEGVTPSNNAIYTTNHDGNFYASFTATKAGVYQVTATLENGDSMQQTVTYVPNVANAEISLAASKDPVIANNNDLTTLTATVADTEGNAIANSEVTFTLPEDVRANFTLGDGGKVVTDTEGKAKVTLKGTKAGAHTVTASMAGGKSEQLVVNFIADTLTAQVNLNVTEDNFIANNVGMTRLQATVTDGNGNPLANEAVTFTLPADVSASFTLGQGGSAITDINGKAEVTLSGTKSGTYPVTVSVNNYGVSDTKQVTLIADAGTAKLASLTSVYSFVVSTTEGATMTASVTDANGNPVEGIKVNFRGTSVTLSSTSVETDDRGFAEILVTSTEVGLKTVSASLADKPTEVISRLLNAKADINSATITSLEIPEGQVMVAQDVAVKAHVNDQFGNPILNESVTFSAEPPEHMTISQNIVSTDTHGIAEVTMTPERNGSYMVKASLANGSSYEKDLVVIDQKLTLSASSPLIGVNSPTGATLTATLTSANGTPVEGQVINFSVTPEGATLSGGKVRTNSSGQAPVVLTSNKVGTYTVTASFHNGVTIQTQTIVKVTGNSSTAHVASFIADPSTIAATNSDLSTLKATVEDGSGNLIEGLTVYFALKSGSATLTSLTAVTDQNGIATTSVRGAITGSVTVSAVTTAGGMQTVDITLVAGPADASQSVLKNNRSSLKGDFTDSAELHLVLHDISGNPIKVSEGLEFVQSGTNAPYVQVSAIDYSKNFSGEYKATVTGGGEGIATLIPVLNGVHQAGLSTTIQFTRAEDKIMSGTVLVNGANLPTTTFPSQGFTGAYYQLNNDNFAPGKTAADYEFSSSASWVDVDATGKVTFKNVGSKWERITATPKTGGPSYIYEIRVKSWWVNAGDAFMIYSLAENFCSSNGYTLPLGDHLNHSRSRGIGSLYSEWGDMGHYTTEAGFHSNMYWSSSPANSNEQYVVSLATGDQSVFEKLGFAYATCYKNL.

A signal peptide spans 1 to 25; the sequence is MGIKLRRLTAGICLITQLVFPMAAA. A LysM domain is found at 50 to 98; the sequence is VPYTLGALESAQSVAERFGISVAELRKLNQFRTFARGFDNVRQGDELDV. An inverse autotransporter region spans residues 125-400; it reads TSQQIGSLLA…SRFDLVDRNN (276 aa). The invasin 3 domain stretch occupies residues 513 to 605; sequence QKDSSVSLSS…GVDAAKAPAV (93 aa). 17 consecutive Big-1 domains span residues 617 to 711, 721 to 815, 822 to 913, 920 to 1017, 1024 to 1116, 1123 to 1220, 1227 to 1319, 1326 to 1423, 1430 to 1523, 1531 to 1633, 1641 to 1734, 1741 to 1837, 1844 to 1941, 1948 to 2032, 2048 to 2141, 2142 to 2235, and 2244 to 2336; these read HSSI…AGFI, IATL…VSFV, QVDL…VIFI, ALTL…MTFV, VVVL…VNIA, QVTL…VTFV, LVVL…VHFI, IIEL…SINV, HLTL…VTYV, EISL…VNFI, QVNL…VTLI, KLAS…PTEV, ITSL…VIDQ, KLTL…IVKV, and VASF…ITLV. Residues 2538 to 2641 are C-type lectin domain; the sequence is KSWWVNAGDA…FAYATCYKNL (104 aa).

Belongs to the intimin/invasin family.

The protein resides in the cell outer membrane. Its function is as follows. A probable inverse autotransporter, it may be involved in biofilm formation and cell adhesion. May bind peptidoglycan via its LysM domain. The sequence is that of Inverse autotransporter adhesin YeeJ (yeeJ) from Escherichia coli O157:H7.